Consider the following 175-residue polypeptide: Alpha-crystallin B chain (175 aa).

The residue at position 1 (Met1) is an N-acetylmethionine. Phosphoserine is present on Ser19. Residue Ser41 is glycosylated (O-linked (GlcNAc) serine). Phosphoserine is present on residues Ser45 and Ser59. In terms of domain architecture, sHSP spans Arg56–Glu164. His83 contributes to the Zn(2+) binding site. N6-acetyllysine; partial is present on Lys92. Residues His104, Glu106, His111, and His119 each contribute to the Zn(2+) site. A disordered region spans residues Asn146 to Lys175. An N6-acetyllysine modification is found at Lys166. The O-linked (GlcNAc) threonine glycan is linked to Thr170.

The protein belongs to the small heat shock protein (HSP20) family. Heteromer composed of three CRYAA and one CRYAB subunits. Aggregates with homologous proteins, including the small heat shock protein HSPB1, to form large heteromeric complexes. Inter-subunit bridging via zinc ions enhances stability, which is crucial as there is no protein turn over in the lens. Interacts with HSPBAP1 and TTN/titin. Interacts with TMEM109; in the cellular response to DNA damage. Interacts with DES; binds rapidly during early stages of DES filament assembly and a reduced binding seen in the later stages. Interacts with TMED10; the interaction mediates the translocation from the cytoplasm into the ERGIC (endoplasmic reticulum-Golgi intermediate compartment) and thereby secretion. Interacts with ATP6V1A and with MTOR, forming a ternary complex. As to expression, lens as well as other tissues. Expressed in myocardial tissue.

It is found in the cytoplasm. Its subcellular location is the nucleus. The protein resides in the secreted. The protein localises to the lysosome. Its function is as follows. May contribute to the transparency and refractive index of the lens. Has chaperone-like activity, preventing aggregation of various proteins under a wide range of stress conditions. In lens epithelial cells, stabilizes the ATP6V1A protein, preventing its degradation by the proteasome. In Homo sapiens (Human), this protein is Alpha-crystallin B chain.